The chain runs to 317 residues: TPR repeat-containing thioredoxin TDX (317 aa).

Positions 1 to 48 (MATAGASSFEDEIMESDIELEGEAVEPDNDPPQKMGDPSVEVSDEKRD) are disordered. A compositionally biased stretch (acidic residues) spans 9 to 29 (FEDEIMESDIELEGEAVEPDN). TPR repeat units lie at residues 50-83 (AQLCKNKGVDAFSEGKLDEAIEHLTEAIVLNPTS), 85-117 (IAYATRAVIFVKSKKPNAAIRDADAALKINPDS), and 119-151 (KGYKSRGMAKAMLGKWEEAAQDLRMAAKLDYDE). Residues 189-316 (EKQRKHAEEV…LERKVAQHGS (128 aa)) form the Thioredoxin domain. Catalysis depends on nucleophile residues cysteine 242 and cysteine 245. Cysteines 242 and 245 form a disulfide.

The protein belongs to the thioredoxin family.

In terms of biological role, probable thiol-disulfide oxidoreductase that may participate in various redox reactions and act as chaperone under heat shock. May interact with HSP70 proteins through the TPR repeats. In Oryza sativa subsp. japonica (Rice), this protein is TPR repeat-containing thioredoxin TDX.